A 61-amino-acid polypeptide reads, in one-letter code: Putative protein RenD (61 aa).

In Escherichia coli (strain K12), this protein is Putative protein RenD (renD).